A 344-amino-acid polypeptide reads, in one-letter code: Dihydroorotase (344 aa).

Zn(2+) contacts are provided by histidine 13 and histidine 15. Residues 15-17 (HLR) and asparagine 41 contribute to the substrate site. Zn(2+) is bound by residues lysine 99, histidine 136, and histidine 174. The residue at position 99 (lysine 99) is an N6-carboxylysine. Histidine 136 is a binding site for substrate. Leucine 219 lines the substrate pocket. Aspartate 247 serves as a coordination point for Zn(2+). The active site involves aspartate 247. 2 residues coordinate substrate: histidine 251 and alanine 263.

The protein belongs to the metallo-dependent hydrolases superfamily. DHOase family. Class II DHOase subfamily. In terms of assembly, homodimer. It depends on Zn(2+) as a cofactor.

The enzyme catalyses (S)-dihydroorotate + H2O = N-carbamoyl-L-aspartate + H(+). The protein operates within pyrimidine metabolism; UMP biosynthesis via de novo pathway; (S)-dihydroorotate from bicarbonate: step 3/3. In terms of biological role, catalyzes the reversible cyclization of carbamoyl aspartate to dihydroorotate. The polypeptide is Dihydroorotase (Acinetobacter baumannii (strain SDF)).